A 350-amino-acid polypeptide reads, in one-letter code: Probable DNA polymerase III subunit delta (350 aa).

Belongs to the DNA polymerase HolA subunit family. As to quaternary structure, component of the DNA clamp loading complex consisting of tau(3):delta(1):delta'(1). The DNA polymerase III holoenzyme complex contains at least 10 different subunits organized into 3 functionally essential subassemblies: the Pol III core, the beta sliding clamp processivity factor and the clamp-loading complex. The Pol III core (subunits alpha, epsilon and theta) contains the polymerase and the 3'-5' exonuclease proofreading activities. The polymerase is tethered to the template via the dimeric beta sliding clamp processivity factor. The DNA clamp-loading complex assembles the beta sliding clamp onto the primed template and plays a central role in the organization and communication at the replication fork.

It catalyses the reaction DNA(n) + a 2'-deoxyribonucleoside 5'-triphosphate = DNA(n+1) + diphosphate. Part of the beta sliding clamp loading complex, which hydrolyzes ATP to load the beta clamp onto primed DNA to form the DNA replication pre-initiation complex. DNA polymerase III is a complex, multichain enzyme responsible for most of the replicative synthesis in bacteria. This DNA polymerase also exhibits 3'-5' exonuclease activity. The delta subunit is the wrench that will open the beta subunit dimer. The DNA clamp loading complex (tau(3),delta,delta') is thought to load beta dimers onto DNA by binding ATP which alters the complex's conformation so it can bind beta sliding clamp dimers and open them at one interface. Primed DNA is recognized, ATP is hydrolyzed releasing the clamp loading complex and closing the beta sliding clamp ring around the primed DNA. This chain is Probable DNA polymerase III subunit delta, found in Aquifex aeolicus (strain VF5).